The primary structure comprises 341 residues: Phenylalanine--tRNA ligase alpha subunit (341 aa).

Residue Glu-256 coordinates Mg(2+).

This sequence belongs to the class-II aminoacyl-tRNA synthetase family. Phe-tRNA synthetase alpha subunit type 1 subfamily. In terms of assembly, tetramer of two alpha and two beta subunits. Mg(2+) is required as a cofactor.

The protein localises to the cytoplasm. It carries out the reaction tRNA(Phe) + L-phenylalanine + ATP = L-phenylalanyl-tRNA(Phe) + AMP + diphosphate + H(+). The polypeptide is Phenylalanine--tRNA ligase alpha subunit (pheS) (Chlamydia muridarum (strain MoPn / Nigg)).